We begin with the raw amino-acid sequence, 373 residues long: Queuine tRNA-ribosyltransferase (373 aa).

D94 (proton acceptor) is an active-site residue. Substrate contacts are provided by residues 94–98, D148, Q191, and G218; that span reads DSGGF. Positions 249-255 are RNA binding; the sequence is GVGTPDY. Residue D268 is the Nucleophile of the active site. An RNA binding; important for wobble base 34 recognition region spans residues 273–277; that stretch reads TRIGR. Residues C306, C308, C311, and H337 each contribute to the Zn(2+) site.

This sequence belongs to the queuine tRNA-ribosyltransferase family. In terms of assembly, homodimer. Within each dimer, one monomer is responsible for RNA recognition and catalysis, while the other monomer binds to the replacement base PreQ1. The cofactor is Zn(2+).

It carries out the reaction 7-aminomethyl-7-carbaguanine + guanosine(34) in tRNA = 7-aminomethyl-7-carbaguanosine(34) in tRNA + guanine. It functions in the pathway tRNA modification; tRNA-queuosine biosynthesis. Functionally, catalyzes the base-exchange of a guanine (G) residue with the queuine precursor 7-aminomethyl-7-deazaguanine (PreQ1) at position 34 (anticodon wobble position) in tRNAs with GU(N) anticodons (tRNA-Asp, -Asn, -His and -Tyr). Catalysis occurs through a double-displacement mechanism. The nucleophile active site attacks the C1' of nucleotide 34 to detach the guanine base from the RNA, forming a covalent enzyme-RNA intermediate. The proton acceptor active site deprotonates the incoming PreQ1, allowing a nucleophilic attack on the C1' of the ribose to form the product. After dissociation, two additional enzymatic reactions on the tRNA convert PreQ1 to queuine (Q), resulting in the hypermodified nucleoside queuosine (7-(((4,5-cis-dihydroxy-2-cyclopenten-1-yl)amino)methyl)-7-deazaguanosine). The polypeptide is Queuine tRNA-ribosyltransferase (Ruminiclostridium cellulolyticum (strain ATCC 35319 / DSM 5812 / JCM 6584 / H10) (Clostridium cellulolyticum)).